Here is an 81-residue protein sequence, read N- to C-terminus: Large ribosomal subunit protein bL31B (81 aa).

Belongs to the bacterial ribosomal protein bL31 family. Type B subfamily. In terms of assembly, part of the 50S ribosomal subunit.

This chain is Large ribosomal subunit protein bL31B, found in Bdellovibrio bacteriovorus (strain ATCC 15356 / DSM 50701 / NCIMB 9529 / HD100).